The following is a 166-amino-acid chain: Cold-inducible RNA-binding protein (166 aa).

The region spanning 6-84 (GKLFVGGLNF…RQIRVDQAGK (79 aa)) is the RRM domain. Residues 68-166 (NGKSVDGRQI…DSYDSYTTQE (99 aa)) are disordered. Residues 93–120 (YRGGSSGGRGFFRGGRGRGGGGDRGYGG) are compositionally biased toward gly residues. Over residues 121–166 (SSRFENRSGGYQSSGSRDYYGRSHGSYGDRSGGSYRDSYDSYTTQE) the composition is skewed to low complexity.

Interacts with prmt1. Interacts with elavl1/elrA (via RRM3). Associates with ribosomes. In terms of processing, methylated on arginine residues within RGG motifs. Methylation by prmt1 promotes cytoplasmic accumulation.

Its subcellular location is the nucleus. It localises to the nucleoplasm. The protein localises to the cytoplasm. Its function is as follows. Cold-inducible mRNA binding protein. Acts cooperatively with elavl1/elrA to stabilize AU-rich element (ARE)-containing mRNAs by binding to themm and inhibiting their deadenylation. Essential for embryonic gastrulation and neural development, acting to maintain the expression of a set of adhesion molecules, and cell movement during embryogenesis. Required for pronephros development. The sequence is that of Cold-inducible RNA-binding protein from Xenopus tropicalis (Western clawed frog).